The primary structure comprises 123 residues: Large ribosomal subunit protein uL14 (123 aa).

Belongs to the universal ribosomal protein uL14 family. Part of the 50S ribosomal subunit. Forms a cluster with proteins L3 and L19. In the 70S ribosome, L14 and L19 interact and together make contacts with the 16S rRNA in bridges B5 and B8.

In terms of biological role, binds to 23S rRNA. Forms part of two intersubunit bridges in the 70S ribosome. The polypeptide is Large ribosomal subunit protein uL14 (Yersinia pestis bv. Antiqua (strain Antiqua)).